The following is a 214-amino-acid chain: Probable transaldolase (214 aa).

The active-site Schiff-base intermediate with substrate is the Lys-83.

This sequence belongs to the transaldolase family. Type 3B subfamily.

The protein resides in the cytoplasm. It carries out the reaction D-sedoheptulose 7-phosphate + D-glyceraldehyde 3-phosphate = D-erythrose 4-phosphate + beta-D-fructose 6-phosphate. The protein operates within carbohydrate degradation; pentose phosphate pathway; D-glyceraldehyde 3-phosphate and beta-D-fructose 6-phosphate from D-ribose 5-phosphate and D-xylulose 5-phosphate (non-oxidative stage): step 2/3. Its function is as follows. Transaldolase is important for the balance of metabolites in the pentose-phosphate pathway. This is Probable transaldolase from Thermodesulfovibrio yellowstonii (strain ATCC 51303 / DSM 11347 / YP87).